A 128-amino-acid chain; its full sequence is MAKDYSRTQRIGDQMQRELAQLIQREIKDPRLGLVTITGVEVSRDVAHAKVFITVMGQDDAERVALNMEILNDAAGYLRMLLGKSMKLRSVPQLHFHYDESIRRGAELSALIERAVAEDRRHGDESED.

Belongs to the RbfA family. As to quaternary structure, monomer. Binds 30S ribosomal subunits, but not 50S ribosomal subunits or 70S ribosomes.

The protein resides in the cytoplasm. Functionally, one of several proteins that assist in the late maturation steps of the functional core of the 30S ribosomal subunit. Associates with free 30S ribosomal subunits (but not with 30S subunits that are part of 70S ribosomes or polysomes). Required for efficient processing of 16S rRNA. May interact with the 5'-terminal helix region of 16S rRNA. In Pseudomonas paraeruginosa (strain DSM 24068 / PA7) (Pseudomonas aeruginosa (strain PA7)), this protein is Ribosome-binding factor A.